A 618-amino-acid chain; its full sequence is Methylmalonyl-CoA mutase small subunit (618 aa).

This sequence belongs to the methylmalonyl-CoA mutase family. Heterodimer of an alpha and a beta chain. Adenosylcob(III)alamin serves as cofactor.

It catalyses the reaction (R)-methylmalonyl-CoA = succinyl-CoA. It participates in metabolic intermediate metabolism; propanoyl-CoA degradation; succinyl-CoA from propanoyl-CoA: step 3/3. Functionally, catalyzes the isomerization of succinyl-CoA to methylmalonyl-CoA during synthesis of propionate from tricarboxylic acid-cycle intermediates. The chain is Methylmalonyl-CoA mutase small subunit (mutA) from Porphyromonas gingivalis (strain ATCC BAA-308 / W83).